Here is a 402-residue protein sequence, read N- to C-terminus: Imidazolonepropionase (402 aa).

Positions 66 and 68 each coordinate Fe(3+). 2 residues coordinate Zn(2+): histidine 66 and histidine 68. The 4-imidazolone-5-propanoate site is built by arginine 75, tyrosine 138, and histidine 171. Tyrosine 138 lines the N-formimidoyl-L-glutamate pocket. Residue histidine 236 coordinates Fe(3+). Position 236 (histidine 236) interacts with Zn(2+). Position 239 (glutamine 239) interacts with 4-imidazolone-5-propanoate. Residue aspartate 311 coordinates Fe(3+). Position 311 (aspartate 311) interacts with Zn(2+). N-formimidoyl-L-glutamate contacts are provided by asparagine 313 and glycine 315. Position 316 (threonine 316) interacts with 4-imidazolone-5-propanoate.

The protein belongs to the metallo-dependent hydrolases superfamily. HutI family. Requires Zn(2+) as cofactor. Fe(3+) is required as a cofactor.

It is found in the cytoplasm. The enzyme catalyses 4-imidazolone-5-propanoate + H2O = N-formimidoyl-L-glutamate. Its pathway is amino-acid degradation; L-histidine degradation into L-glutamate; N-formimidoyl-L-glutamate from L-histidine: step 3/3. In terms of biological role, catalyzes the hydrolytic cleavage of the carbon-nitrogen bond in imidazolone-5-propanoate to yield N-formimidoyl-L-glutamate. It is the third step in the universal histidine degradation pathway. The sequence is that of Imidazolonepropionase from Pseudomonas aeruginosa (strain UCBPP-PA14).